The chain runs to 1616 residues: Replicase large subunit (1616 aa).

Positions 50–458 are methyltransferase; it reads FSKVISEEQT…QSLSMTFYLH (409 aa). Positions 72-281 constitute an Alphavirus-like MT domain; it reads TFYNTQNAVH…HSYSNILKYV (210 aa). The (+)RNA virus helicase ATP-binding domain maps to 801-963; sequence VVYSDMAKLR…KLEVDEVETR (163 aa). The interval 830–1085 is helicase; the sequence is LVDGVPGCGK…RHTCSLKYYT (256 aa). 833 to 840 contacts ATP; sequence GVPGCGKT. Residues 964 to 1116 form the (+)RNA virus helicase C-terminal domain; sequence RTTLRCPADV…DMYKVDAGTQ (153 aa). The RdRp catalytic domain occupies 1380-1493; that stretch reads MDVLELDISK…YFPKGCEFPD (114 aa).

Belongs to the ssRNA positive-strand viruses RNA-directed RNA polymerase family. As to quaternary structure, heterodimer of a large and a small subunit.

It carries out the reaction RNA(n) + a ribonucleoside 5'-triphosphate = RNA(n+1) + diphosphate. The enzyme catalyses ATP + H2O = ADP + phosphate + H(+). Is an RNA-dependent RNA polymerase active in viral RNA replication. Its function is as follows. Is a methyltransferase active in RNA capping and an RNA helicase. Methyltransferase displays a cytoplasmic capping enzyme activity. This function is necessary since all viral RNAs are synthesized in the cytoplasm, and host capping enzymes are restricted to the nucleus. Helicase region probably exhibits NTPase and RNA unwinding activities (Potential). It also acts as a suppressor of RNA-mediated gene silencing, also known as post-transcriptional gene silencing (PTGS), a mechanism of plant viral defense that limits the accumulation of viral RNAs. May mediate silencing suppression through either inhibition of HEN1-mediated siRNA or siRNA demethylation. This chain is Replicase large subunit, found in Nicotiana tabacum (Common tobacco).